Consider the following 286-residue polypeptide: Alpha-ketoglutarate-dependent dioxygenase alkB homolog 3 (286 aa).

Residues 1–46 form a disordered region; the sequence is MEDKRQRARVQGGWATPTKSQSATQPASPARSRLSQTAGPAWRSKE. The span at 17–38 shows a compositional bias: polar residues; that stretch reads PTKSQSATQPASPARSRLSQTA. Substrate contacts are provided by residues W115 and 141-143; that span reads YTY. The 107-residue stretch at 172–278 folds into the Fe2OG dioxygenase domain; that stretch reads TFNSLLCNFY…RVNLTFRTVY (107 aa). Residue L177 is modified to (4R)-5-hydroxyleucine; alternate. L177 bears the (4R)-5-oxoleucine; alternate mark. 179 to 181 serves as a coordination point for 2-oxoglutarate; it reads NFY. H191 and D193 together coordinate Fe cation. Residue D194 participates in substrate binding. H257 is a Fe cation binding site. 2-oxoglutarate-binding positions include 269–275 and R275; that span reads RVNLTFR.

Belongs to the alkB family. In terms of assembly, interacts with the ASCC complex composed of ASCC1, ASCC2 and ASCC3. Interacts directly with ASCC3, and is thereby recruited to the ASCC complex. Interacts with OTUD4; the interaction is direct. Interacts with USP7 and USP9X. Requires Fe(2+) as cofactor. Post-translationally, ubiquitinated; undergoes 'Lys-48'-linked polyubiquitination. OTUD4 promotes USP7 and USP9X-dependent deubiquitination of 'Lys-48'-polyubiquitinated ALKBH3 promoting the repair of alkylated DNA lesions. Detected in testis, kidney, liver and heart.

The protein resides in the nucleus. The protein localises to the cytoplasm. It carries out the reaction an N(1)-methyladenosine in mRNA + 2-oxoglutarate + O2 = an adenosine in mRNA + formaldehyde + succinate + CO2. It catalyses the reaction a methylated nucleobase within DNA + 2-oxoglutarate + O2 = a nucleobase within DNA + formaldehyde + succinate + CO2. The enzyme catalyses an N(1)-methyl-2'-deoxyadenosine in single-stranded DNA + 2-oxoglutarate + O2 = a 2'-deoxyadenosine in single-stranded DNA + formaldehyde + succinate + CO2 + H(+). The catalysed reaction is an N(3)-methyl-2'-deoxycytidine in single-stranded DNA + 2-oxoglutarate + O2 = a 2'-deoxycytidine in single-stranded DNA + formaldehyde + succinate + CO2 + H(+). It carries out the reaction a 3,N(4)-etheno-2'-deoxycytidine in single-stranded DNA + 2-oxoglutarate + O2 + H2O = a 2'-deoxycytidine in single-stranded DNA + glyoxal + succinate + CO2. Its activity is regulated as follows. Activated by ascorbate. Its function is as follows. Dioxygenase that mediates demethylation of DNA and RNA containing 1-methyladenosine (m1A). Repairs alkylated DNA containing 1-methyladenosine (m1A) and 3-methylcytosine (m3C) by oxidative demethylation. Has a strong preference for single-stranded DNA. Able to process alkylated m3C within double-stranded regions via its interaction with ASCC3, which promotes DNA unwinding to generate single-stranded substrate needed for ALKBH3. Can repair exocyclic 3,N4-ethenocytosine adducs in single-stranded DNA. Also acts on RNA. Demethylates N(1)-methyladenosine (m1A) RNA, an epigenetic internal modification of messenger RNAs (mRNAs) highly enriched within 5'-untranslated regions (UTRs) and in the vicinity of start codons. Requires molecular oxygen, alpha-ketoglutarate and iron. This chain is Alpha-ketoglutarate-dependent dioxygenase alkB homolog 3, found in Mus musculus (Mouse).